A 306-amino-acid polypeptide reads, in one-letter code: Pantothenate kinase (306 aa).

Residue 90 to 97 (GSVAVGKS) coordinates ATP.

It belongs to the prokaryotic pantothenate kinase family.

It is found in the cytoplasm. It carries out the reaction (R)-pantothenate + ATP = (R)-4'-phosphopantothenate + ADP + H(+). It participates in cofactor biosynthesis; coenzyme A biosynthesis; CoA from (R)-pantothenate: step 1/5. The polypeptide is Pantothenate kinase (coaA) (Listeria innocua serovar 6a (strain ATCC BAA-680 / CLIP 11262)).